Consider the following 111-residue polypeptide: Secreted RxLR effector protein 159 (111 aa).

Residues 1 to 21 (MRGAYYVAIAFLVAASSRTAA) form the signal peptide. The RxLR-dEER signature appears at 50–71 (RVLRGSRDLKDKLAVYANDEQR). Asn81 carries an N-linked (GlcNAc...) asparagine glycan.

This sequence belongs to the RxLR effector family.

It is found in the secreted. The protein localises to the host nucleus. It localises to the host cytoplasm. Secreted effector that completely suppresses the host cell death induced by cell death-inducing proteins. The protein is Secreted RxLR effector protein 159 of Plasmopara viticola (Downy mildew of grapevine).